The sequence spans 1261 residues: Structural maintenance of chromosomes protein 3 (1261 aa).

Coiled-coil stretches lie at residues glutamate 188 to glutamine 332 and leucine 406 to aspartate 450. In terms of domain architecture, SMC hinge spans asparagine 534–alanine 645. 3 coiled-coil regions span residues lysine 677–methionine 826, asparagine 857–threonine 930, and arginine 1023–lysine 1085. Residues leucine 1159–leucine 1193 carry the DA-box motif.

This sequence belongs to the SMC family. SMC3 subfamily. In terms of assembly, component of the cohesin complex, composed of the smc-1 and smc-3 heterodimer attached via their SMC hinge domain, scc-1 which links them, and scc-3. Interacts with scc-1, smc-1 and tim-1.

The protein resides in the nucleus. It localises to the chromosome. Functionally, involved in chromosome cohesion during cell cycle and in DNA repair. Involved in the repair of double strand breaks during mitosis and meiosis. Required for chromosome segregation during mitosis. Central component of cohesin complex. The cohesin complex is required for the cohesion of sister chromatids after DNA replication. The cohesin complex apparently forms a large proteinaceous ring within which sister chromatids can be trapped. At anaphase, the complex is cleaved and dissociates from chromatin, allowing sister chromatids to segregate. Required for the localization of lab-1 to meiotic and mitotic chromosomes. In Caenorhabditis elegans, this protein is Structural maintenance of chromosomes protein 3.